The chain runs to 274 residues: MRSNNNNPLTRDEILSRYFPQYRPAVTASQGLSGGSCIIAHDTHRIVLRRHHDPDAPPAHFLRHHRALSQLPASLAPRALFYTPGWMAVEYLHGVVNSALPDADELAALLYHLHQQPHFGWRIALSPLLAQYWSCCDPARRTPFWLRRLKQLQKNGEPRPLRLAPLHMDVHGDNIVLTSAGLRLIDWEYAGDGDIALELAAVWVEDERQHRQLADAYAARARIDARQLWRQIRLWHPWVIMLKAGWFEYRWRQTGEQQFIRLADETWRQLRMKG.

The protein belongs to the thiamine kinase family.

The catalysed reaction is thiamine + ATP = thiamine phosphate + ADP + H(+). The protein operates within cofactor biosynthesis; thiamine diphosphate biosynthesis; thiamine phosphate from thiamine: step 1/1. Its function is as follows. Catalyzes the ATP-dependent phosphorylation of thiamine to thiamine phosphate. Is involved in thiamine salvage. The chain is Thiamine kinase from Salmonella paratyphi A (strain ATCC 9150 / SARB42).